The primary structure comprises 161 residues: Putative 4-hydroxy-4-methyl-2-oxoglutarate aldolase (161 aa).

Substrate contacts are provided by residues Gly75–Leu78 and Arg97. Asp98 contacts a divalent metal cation.

It belongs to the class II aldolase/RraA-like family. As to quaternary structure, homotrimer. Requires a divalent metal cation as cofactor.

It catalyses the reaction 4-hydroxy-4-methyl-2-oxoglutarate = 2 pyruvate. The enzyme catalyses oxaloacetate + H(+) = pyruvate + CO2. Functionally, catalyzes the aldol cleavage of 4-hydroxy-4-methyl-2-oxoglutarate (HMG) into 2 molecules of pyruvate. Also contains a secondary oxaloacetate (OAA) decarboxylase activity due to the common pyruvate enolate transition state formed following C-C bond cleavage in the retro-aldol and decarboxylation reactions. The sequence is that of Putative 4-hydroxy-4-methyl-2-oxoglutarate aldolase from Alkalilimnicola ehrlichii (strain ATCC BAA-1101 / DSM 17681 / MLHE-1).